Reading from the N-terminus, the 179-residue chain is QVLVDLDGDPLYNGMSYYILPVARGKGGGLELARTGSESCPRTVVQTRSETSRGLPARLASPYRILIGSNIPLTIEFQPQKPYSCHGHSSRSLQWKVEKTQMVKIASSDEEQRLFGPFQIQPYRNHYKLVYCESESRNHHDDCRDLGISIDDQQNRLLVVKNGDPLVVQFAKANRGGDD.

The residue at position 1 (Q1) is a Pyrrolidone carboxylic acid. Cystine bridges form between C40-C85 and C132-C143.

Belongs to the protease inhibitor I3 (leguminous Kunitz-type inhibitor) family. In terms of assembly, heterodimer of an alpha and a beta chain linked by a disulfide bond. Abundant in dry seeds.

Its subcellular location is the secreted. Its function is as follows. Inhibits trypsin, plasmin, human plasma kallikrein, chymotrypsin and factor XIIa activity. This chain is Trypsin inhibitor, found in Leucaena leucocephala (White popinac).